An 890-amino-acid chain; its full sequence is Alanine--tRNA ligase (890 aa).

Histidine 565, histidine 569, cysteine 677, and histidine 681 together coordinate Zn(2+).

It belongs to the class-II aminoacyl-tRNA synthetase family. Zn(2+) serves as cofactor.

The protein resides in the cytoplasm. It carries out the reaction tRNA(Ala) + L-alanine + ATP = L-alanyl-tRNA(Ala) + AMP + diphosphate. Its function is as follows. Catalyzes the attachment of alanine to tRNA(Ala) in a two-step reaction: alanine is first activated by ATP to form Ala-AMP and then transferred to the acceptor end of tRNA(Ala). Also edits incorrectly charged Ser-tRNA(Ala) and Gly-tRNA(Ala) via its editing domain. This chain is Alanine--tRNA ligase, found in Zymomonas mobilis subsp. mobilis (strain ATCC 31821 / ZM4 / CP4).